The sequence spans 191 residues: MEVILLERIAKLGQMGETVKVRDGFARNYLLPLGKALRANAANKARFESERSTLEARNLERKSEAQKVADSLDGKSFIIVRSAGETGQLYGSVAARDIVETLAAEGFNINRNQVDLNQPIKAIGLHKVTLHLHGEVDVAIEINVARSAEEAERQAKGESLTSADAIYGVDEDALKPEDFFNPEAELESEEE.

Residues 171 to 191 (EDALKPEDFFNPEAELESEEE) are disordered.

It belongs to the bacterial ribosomal protein bL9 family.

In terms of biological role, binds to the 23S rRNA. The sequence is that of Large ribosomal subunit protein bL9 from Rhizobium meliloti (strain 1021) (Ensifer meliloti).